A 119-amino-acid polypeptide reads, in one-letter code: Basic phospholipase A2 acanthin-1 (119 aa).

7 disulfide bridges follow: C11/C71, C27/C118, C29/C45, C44/C99, C51/C92, C60/C85, and C78/C90. 3 residues coordinate Ca(2+): Y28, G30, and G32. Residue H48 is part of the active site. Ca(2+) is bound at residue D49. D93 is an active-site residue.

It depends on Ca(2+) as a cofactor. As to expression, expressed by the venom gland.

It localises to the secreted. The enzyme catalyses a 1,2-diacyl-sn-glycero-3-phosphocholine + H2O = a 1-acyl-sn-glycero-3-phosphocholine + a fatty acid + H(+). Functionally, snake venom phospholipase A2 (PLA2) that potently inhibits ADP-(IC(50)=10 nM) and collagen-induced (IC(50)=7 nM) platelet aggregation when tested on human whole blood. PLA2 catalyzes the calcium-dependent hydrolysis of the 2-acyl groups in 3-sn-phosphoglycerides. The chain is Basic phospholipase A2 acanthin-1 from Acanthophis antarcticus (Common death adder).